Reading from the N-terminus, the 322-residue chain is Manganese-dependent ADP-ribose/CDP-alcohol diphosphatase (322 aa).

Zn(2+) is bound by residues aspartate 13, glutamine 15, aspartate 60, asparagine 96, histidine 228, histidine 265, and histidine 267.

This sequence belongs to the ADPRibase-Mn family. As to quaternary structure, monomer. The cofactor is Mg(2+).

The enzyme catalyses CDP-choline + H2O = phosphocholine + CMP + 2 H(+). The catalysed reaction is ADP-D-ribose + H2O = D-ribose 5-phosphate + AMP + 2 H(+). It carries out the reaction CDP-glycerol + H2O = sn-glycerol 3-phosphate + CMP + 2 H(+). Hydrolyzes ADP-ribose, IDP-ribose, CDP-glycerol, CDP-choline and CDP-ethanolamine, but not other non-reducing ADP-sugars or CDP-glucose. The polypeptide is Manganese-dependent ADP-ribose/CDP-alcohol diphosphatase (adprm) (Danio rerio (Zebrafish)).